The following is a 449-amino-acid chain: Probable glycine dehydrogenase (decarboxylating) subunit 1 (449 aa).

Belongs to the GcvP family. N-terminal subunit subfamily. As to quaternary structure, the glycine cleavage system is composed of four proteins: P, T, L and H. In this organism, the P 'protein' is a heterodimer of two subunits.

The catalysed reaction is N(6)-[(R)-lipoyl]-L-lysyl-[glycine-cleavage complex H protein] + glycine + H(+) = N(6)-[(R)-S(8)-aminomethyldihydrolipoyl]-L-lysyl-[glycine-cleavage complex H protein] + CO2. The glycine cleavage system catalyzes the degradation of glycine. The P protein binds the alpha-amino group of glycine through its pyridoxal phosphate cofactor; CO(2) is released and the remaining methylamine moiety is then transferred to the lipoamide cofactor of the H protein. The protein is Probable glycine dehydrogenase (decarboxylating) subunit 1 of Pyrococcus horikoshii (strain ATCC 700860 / DSM 12428 / JCM 9974 / NBRC 100139 / OT-3).